A 436-amino-acid polypeptide reads, in one-letter code: MNGNTGVVSGVRVSHETASLDELAAASAASTEAALDALLEQPPVEEAFVLQTCHRVEAYVVTADQASGRRALGGAGFNPAGGGAISMGHEDSLRHLLRVAAGLESLVVGEDQILGQLRDAYDAAKDAGGIDHVLREAVTKAMHVGERARTETAINEGATSLGTAAVRLAERKTQLADARAVVVGAGEMGALAAKAFASATVAEIVIANRTPARAVRVADMVSVPAEATTLADARGRLDAADVVVTATGSPEHVLPASAFADAGDTVVVDLAQPRDVAPGAGGHDGVAVHDLDDLEAVTAATRERREDAAREVEAMIETEFERLLTQYKRKRADEVIARMYESADRLKSREVQTAVHRLEAESGSLSADEREVVESMADALVSQLLAAPTKSLRDAAAEDDWSTIATALELFNPEFEDGMPFDASRGGDAASAESED.

Substrate-binding positions include Thr52–Arg55, Ser105, Glu110–Gln112, and Gln116. The Nucleophile role is filled by Cys53. NADP(+) is bound at residue Gly184–Gly189.

It belongs to the glutamyl-tRNA reductase family. In terms of assembly, homodimer.

It carries out the reaction (S)-4-amino-5-oxopentanoate + tRNA(Glu) + NADP(+) = L-glutamyl-tRNA(Glu) + NADPH + H(+). Its pathway is porphyrin-containing compound metabolism; protoporphyrin-IX biosynthesis; 5-aminolevulinate from L-glutamyl-tRNA(Glu): step 1/2. Its function is as follows. Catalyzes the NADPH-dependent reduction of glutamyl-tRNA(Glu) to glutamate 1-semialdehyde (GSA). This chain is Glutamyl-tRNA reductase, found in Halobacterium salinarum (strain ATCC 29341 / DSM 671 / R1).